We begin with the raw amino-acid sequence, 411 residues long: Na(+)-translocating NADH-quinone reductase subunit B (411 aa).

Transmembrane regions (helical) follow at residues Met56 to Gly76, Ala120 to Trp140, and Ile166 to Val186. Thr233 is subject to FMN phosphoryl threonine. 5 consecutive transmembrane segments (helical) span residues Val272–Trp292, Ile294–Ser314, Met319–Phe339, Ser348–Ile368, and Gly378–Val398.

It belongs to the NqrB/RnfD family. In terms of assembly, composed of six subunits; NqrA, NqrB, NqrC, NqrD, NqrE and NqrF. Requires FMN as cofactor.

The protein resides in the cell inner membrane. The catalysed reaction is a ubiquinone + n Na(+)(in) + NADH + H(+) = a ubiquinol + n Na(+)(out) + NAD(+). Its function is as follows. NQR complex catalyzes the reduction of ubiquinone-1 to ubiquinol by two successive reactions, coupled with the transport of Na(+) ions from the cytoplasm to the periplasm. NqrA to NqrE are probably involved in the second step, the conversion of ubisemiquinone to ubiquinol. This chain is Na(+)-translocating NADH-quinone reductase subunit B, found in Haemophilus influenzae (strain 86-028NP).